We begin with the raw amino-acid sequence, 1018 residues long: Pleckstrin homology domain-containing family M member 2 (1018 aa).

An N-acetylmethionine modification is found at Met-1. The interaction with KIF5B stretch occupies residues 1 to 289; it reads MEPREVKDRI…PDQPDACTEL (289 aa). Positions 36 to 158 constitute an RUN domain; sequence RNHDKVLQRL…IRFDLDLDAP (123 aa). Disordered regions lie at residues 210–367, 407–440, 452–520, 526–545, and 555–583; these read SAIA…SSEL, TWCS…SEGL, ESPS…DSQL, EPLV…EPGT, and DQPS…THPS. Residues 230–245 show a composition bias toward low complexity; sequence STASDLTSSKTSTKSP. Residues 258-270 show a composition bias toward polar residues; that stretch reads ETASSDTTPVHTT. Positions 294-306 are enriched in basic residues; the sequence is VTKKKKIGKKKKT. Polar residues-rich tracts occupy residues 316–325 and 347–367; these read HPTSSQQKCG and VLAS…SSEL. Ser-423 is modified (phosphoserine). One can recognise a PH domain in the interval 770-872; that stretch reads TITKEGMLHY…WMQHLCQAVS (103 aa).

Interacts with KLC2 (via TPR repeats). Interacts with KIF5B. Interacts with BORCS5. Interacts (via RUN domain) with ARL8B (GTP-bound form); PLEKHM1 and PLEKHM2 compete for interaction with ARL8B. Interacts with ARL8A.

The protein resides in the cytoplasm. It is found in the lysosome membrane. Plays a role in lysosomes movement and localization at the cell periphery acting as an effector of ARL8B. Required for ARL8B to exert its effects on lysosome location, recruits kinesin-1 to lysosomes and hence direct their movement toward microtubule plus ends. Binding to ARL8B provides a link from lysosomal membranes to plus-end-directed motility. Critical factor involved in NK cell-mediated cytotoxicity. Drives the polarization of cytolytic granules and microtubule-organizing centers (MTOCs) toward the immune synapse between effector NK lymphocytes and target cells. Required for maintenance of the Golgi apparatus organization. May play a role in membrane tubulation. The sequence is that of Pleckstrin homology domain-containing family M member 2 from Mus musculus (Mouse).